Reading from the N-terminus, the 1518-residue chain is Putative cellulose synthase 2 (1518 aa).

Residues 1-731 (MYGTWFTTGK…EEKLEKQSFV (731 aa)) are catalytic. A run of 3 helical transmembrane segments spans residues 24-44 (PVWVPVVLGVVLMAFVGSVRI), 71-91 (ITVFLMMLSLLVSLRYIVWRL), and 105-125 (LAVLLLLAEAYALMTLCLSYF). The interval 144 to 237 (QWPSVDVFVP…FAVIFDCDHV (94 aa)) is catalytic subdomain A. Residue D186 is part of the active site. Residues D233 and D235 each contribute to the substrate site. Positions 314-374 (EAVMGIGGFA…GQRVRWARGM (61 aa)) are catalytic subdomain B. Residue D330 is part of the active site. The next 5 membrane-spanning stretches (helical) occupy residues 404–424 (FLFAIPRLTFLVSPLAFLFLG), 427–447 (IIAASPLAISVYALPHIFHSV), 465–485 (IYETSLALFLVRITIVTLLQP), 514–534 (ILAGVLCAALLRGVFGIVWQF), and 543–563 (FILNTLWVVISLIIVLASIAV). One can recognise a PilZ domain in the interval 569 to 668 (QTRNAPRVSV…ERQVVSMVFG (100 aa)). A cyclic di-GMP binding domain region spans residues 732–1518 (LKPVPRSARH…IARDDLTGEL (787 aa)). A disordered region spans residues 765-785 (APSPDQSGVTAETPFGDSNTG). The span at 768–785 (PDQSGVTAETPFGDSNTG) shows a compositional bias: polar residues. Residues 1481–1501 (ALYLAGLAGAGLAALGVWAWL) form a helical membrane-spanning segment.

It in the N-terminal section; belongs to the glycosyltransferase 2 family. This sequence in the C-terminal section; belongs to the AcsB/BcsB family.

The protein localises to the cell inner membrane. The enzyme catalyses [(1-&gt;4)-beta-D-glucosyl](n) + UDP-alpha-D-glucose = [(1-&gt;4)-beta-D-glucosyl](n+1) + UDP + H(+). Its pathway is glycan metabolism; bacterial cellulose biosynthesis. The sequence is that of Putative cellulose synthase 2 (bcsABII-A) from Komagataeibacter xylinus (Gluconacetobacter xylinus).